A 485-amino-acid polypeptide reads, in one-letter code: Shutoff alkaline exonuclease (485 aa).

The protein belongs to the herpesviridae alkaline nuclease family. Forms a complex with the DNA polymerase, the DNA polymerase processivity factor, and the major DNA binding protein.

The protein localises to the host nucleus. It is found in the host cytoplasm. Plays a role in processing non linear or branched viral DNA intermediates in order to promote the production of mature packaged unit-length linear progeny viral DNA molecules. Exhibits endonuclease and exonuclease activities and accepts both double-stranded and single-stranded DNA as substrate. Exonuclease digestion of DNA is in the 5'-&gt; 3' direction and the products are 5'-monophosphate nucleosides. Additionally, forms a recombinase with the major DNA-binding protein, which displays strand exchange activity. Also acts as a cytoplasmic RNA endonuclease that induces degradation of the majority of the cellular messenger RNAs during early lytic infection. The resulting inhibition of cellular protein synthesis serves to ensure maximal viral gene expression and evasion from host immune response. Internally cleaves host mRNAs which are then degraded by the cellular exonuclease XRN1. Bypasses therefore the regulatory steps of deadenylation and decapping normally required for XRN1 activation. In Alcelaphine herpesvirus 1 (strain C500) (AlHV-1), this protein is Shutoff alkaline exonuclease (37).